Here is a 283-residue protein sequence, read N- to C-terminus: MMELYIGSHLSTAGGWNALLERSHEEGGTAFAFFPRSPYGKRSKALDPAGAAAFGARLKAEGYGPLVVHAPYVYNLAGKDEAKRAFAIEALAEDIELLTAIRAAGQEVYINIHPGAHVGQGAETGCRLISEGLNQVFERADGVMVLLETMAGKGTECGRNFDELATIMDGVENKANVGVTFDTCHVLDAGYDLENDYDGVMRQLDEAIGLARVKAIHVNDSQFGLGSHKDRHANIGEGQLGIPFFTRLVNDPTMAKLPMILETKEQTPTTHRDEIALLRGLVD.

The Zn(2+) site is built by His69, His113, Glu148, Asp182, His185, His217, Asp230, His232, and Glu262.

Belongs to the AP endonuclease 2 family. It depends on Zn(2+) as a cofactor.

The catalysed reaction is Endonucleolytic cleavage to 5'-phosphooligonucleotide end-products.. Functionally, endonuclease IV plays a role in DNA repair. It cleaves phosphodiester bonds at apurinic or apyrimidinic (AP) sites, generating a 3'-hydroxyl group and a 5'-terminal sugar phosphate. The protein is Probable endonuclease 4 of Bifidobacterium longum (strain NCC 2705).